The sequence spans 200 residues: Recombination protein RecR (200 aa).

The C4-type zinc finger occupies 59–74 (CSTCGSLDTQDPCAIC). A Toprim domain is found at 82–177 (SLICVVEEVG…TVSMLARGVP (96 aa)).

It belongs to the RecR family.

May play a role in DNA repair. It seems to be involved in an RecBC-independent recombinational process of DNA repair. It may act with RecF and RecO. This is Recombination protein RecR from Phenylobacterium zucineum (strain HLK1).